A 412-amino-acid polypeptide reads, in one-letter code: Multifunctional CCA protein (412 aa).

Residues Gly-8 and Arg-11 each contribute to the ATP site. The CTP site is built by Gly-8 and Arg-11. Positions 21 and 23 each coordinate Mg(2+). ATP-binding residues include Arg-91, Arg-137, and Arg-140. CTP-binding residues include Arg-91, Arg-137, and Arg-140. One can recognise an HD domain in the interval 228 to 329 (TGIHTMMVLA…LKVFDKADAW (102 aa)).

It belongs to the tRNA nucleotidyltransferase/poly(A) polymerase family. Bacterial CCA-adding enzyme type 1 subfamily. As to quaternary structure, monomer. Can also form homodimers and oligomers. It depends on Mg(2+) as a cofactor. Ni(2+) serves as cofactor.

The catalysed reaction is a tRNA precursor + 2 CTP + ATP = a tRNA with a 3' CCA end + 3 diphosphate. The enzyme catalyses a tRNA with a 3' CCA end + 2 CTP + ATP = a tRNA with a 3' CCACCA end + 3 diphosphate. In terms of biological role, catalyzes the addition and repair of the essential 3'-terminal CCA sequence in tRNAs without using a nucleic acid template. Adds these three nucleotides in the order of C, C, and A to the tRNA nucleotide-73, using CTP and ATP as substrates and producing inorganic pyrophosphate. tRNA 3'-terminal CCA addition is required both for tRNA processing and repair. Also involved in tRNA surveillance by mediating tandem CCA addition to generate a CCACCA at the 3' terminus of unstable tRNAs. While stable tRNAs receive only 3'-terminal CCA, unstable tRNAs are marked with CCACCA and rapidly degraded. The polypeptide is Multifunctional CCA protein (Aeromonas hydrophila subsp. hydrophila (strain ATCC 7966 / DSM 30187 / BCRC 13018 / CCUG 14551 / JCM 1027 / KCTC 2358 / NCIMB 9240 / NCTC 8049)).